A 259-amino-acid polypeptide reads, in one-letter code: MVTGHGTGHHGQSPVRVPLSSGAPLVEATFASRPSQFLVEAQMGGRMVRAHLADRGRLTDLLTPGARLLLASREEIGRKTAFQVVAVYQDGDLVSLDTQLPNRLVAAALSLGALPQFARYSRVQREVQLGPHRIDFRLSEGLDTCLLEVKSVTRLVDGIAVFPDAPTERGGRHLELLINAARNGQRAAVVFIIQRSRGCAFAPDVTVDPAFSRSLREARSVGVEIYAYRCPVDPSGITLGQEVPVFASFAAVPFELRQH.

This sequence belongs to the SfsA family.

This Chloroflexus aurantiacus (strain ATCC 29364 / DSM 637 / Y-400-fl) protein is Sugar fermentation stimulation protein homolog.